The primary structure comprises 59 residues: Sperm protamine P1-type (59 aa).

The tract at residues 1–59 is disordered; the sequence is MARYRRNRSRSRSRRRRRRRGGRGGRRGRRRRRHGQRRRGRRGRERTRRRRRRRRRSSS.

It belongs to the protamine P1 family. In terms of tissue distribution, testis.

The protein resides in the nucleus. It is found in the chromosome. Its function is as follows. Protamines substitute for histones in the chromatin of sperm during the haploid phase of spermatogenesis. They compact sperm DNA into a highly condensed, stable and inactive complex. This chain is Sperm protamine P1-type, found in Chrysemys picta bellii (Western painted turtle).